Consider the following 129-residue polypeptide: Small ribosomal subunit protein uS11c (129 aa).

This sequence belongs to the universal ribosomal protein uS11 family. Part of the 30S ribosomal subunit.

The protein resides in the plastid. Its subcellular location is the chloroplast. The sequence is that of Small ribosomal subunit protein uS11c from Gracilaria tenuistipitata var. liui (Red alga).